The sequence spans 122 residues: Large ribosomal subunit protein uL14 (122 aa).

It belongs to the universal ribosomal protein uL14 family. Part of the 50S ribosomal subunit. Forms a cluster with proteins L3 and L19. In the 70S ribosome, L14 and L19 interact and together make contacts with the 16S rRNA in bridges B5 and B8.

Binds to 23S rRNA. Forms part of two intersubunit bridges in the 70S ribosome. This chain is Large ribosomal subunit protein uL14, found in Thermodesulfovibrio yellowstonii (strain ATCC 51303 / DSM 11347 / YP87).